Here is a 474-residue protein sequence, read N- to C-terminus: Shugoshin-1 (474 aa).

Disordered regions lie at residues 1 to 53 (MTST…KPNA), 189 to 226 (VESQ…NQGS), 322 to 356 (NSKQ…RCSK), and 422 to 442 (VSME…RKSN). 2 stretches are compositionally biased toward polar residues: residues 12-22 (GSLNPPHSNPS) and 190-201 (ESQSAVSSNTVC). Basic residues predominate over residues 211 to 220 (KRMPQRRRSS). Polar residues-rich tracts occupy residues 322-341 (NSKQ…NTVD) and 422-431 (VSMEQRTNQE).

This sequence belongs to the shugoshin family. As to expression, highly expressed in tissues containing meiocytes. Expressed at much lower level in leaves and pollen-containing flowers.

It localises to the nucleus. It is found in the chromosome. The protein localises to the centromere. Functionally, plays a central role in chromosome cohesion during meiosis I by preventing premature dissociation of cohesin complex from centromeres after prophase, when most of cohesin complex dissociates from chromosomes arms. Required for maintenance of centromeric cohesion before prophase II and correct segregation of chromatids during meiosis II. Has apparently no function in mitosis. The polypeptide is Shugoshin-1 (Zea mays (Maize)).